The primary structure comprises 491 residues: Cyclin-A1-3 (491 aa).

The span at 1–21 shows a compositional bias: low complexity; the sequence is MSSSLASRRSSSSSAAKRPAA. Disordered regions lie at residues 1–32 and 69–106; these read MSSSLASRRSSSSSAAKRPAAGEGGGKAAAGA and SLASGRNVGTNRVSAVKSASTKPASAISRHESAPQKES. The span at 75–91 shows a compositional bias: polar residues; the sequence is NVGTNRVSAVKSASTKP.

It belongs to the cyclin family. Cyclin AB subfamily.

The sequence is that of Cyclin-A1-3 (CYCA1-3) from Oryza sativa subsp. japonica (Rice).